Reading from the N-terminus, the 283-residue chain is Formamidopyrimidine-DNA glycosylase (283 aa).

The active-site Schiff-base intermediate with DNA is proline 2. Catalysis depends on glutamate 3, which acts as the Proton donor. The Proton donor; for beta-elimination activity role is filled by lysine 60. DNA contacts are provided by histidine 95, arginine 114, and arginine 159. The FPG-type zinc finger occupies 244-278; it reads WVYGRHNQPCRVCGTPIERIKLGGRSSHFCPQCQP. The Proton donor; for delta-elimination activity role is filled by arginine 268.

It belongs to the FPG family. As to quaternary structure, monomer. Zn(2+) serves as cofactor.

It carries out the reaction Hydrolysis of DNA containing ring-opened 7-methylguanine residues, releasing 2,6-diamino-4-hydroxy-5-(N-methyl)formamidopyrimidine.. It catalyses the reaction 2'-deoxyribonucleotide-(2'-deoxyribose 5'-phosphate)-2'-deoxyribonucleotide-DNA = a 3'-end 2'-deoxyribonucleotide-(2,3-dehydro-2,3-deoxyribose 5'-phosphate)-DNA + a 5'-end 5'-phospho-2'-deoxyribonucleoside-DNA + H(+). Its function is as follows. Involved in base excision repair of DNA damaged by oxidation or by mutagenic agents. Acts as a DNA glycosylase that recognizes and removes damaged bases. Has a preference for oxidized purines, such as 7,8-dihydro-8-oxoguanine (8-oxoG). Has AP (apurinic/apyrimidinic) lyase activity and introduces nicks in the DNA strand. Cleaves the DNA backbone by beta-delta elimination to generate a single-strand break at the site of the removed base with both 3'- and 5'-phosphates. The chain is Formamidopyrimidine-DNA glycosylase from Crocosphaera subtropica (strain ATCC 51142 / BH68) (Cyanothece sp. (strain ATCC 51142)).